A 318-amino-acid polypeptide reads, in one-letter code: Ribonuclease Z (318 aa).

His62, His64, Asp66, His67, His144, Asp215, and His273 together coordinate Zn(2+). The Proton acceptor role is filled by Asp66.

The protein belongs to the RNase Z family. As to quaternary structure, homodimer. The cofactor is Zn(2+).

It catalyses the reaction Endonucleolytic cleavage of RNA, removing extra 3' nucleotides from tRNA precursor, generating 3' termini of tRNAs. A 3'-hydroxy group is left at the tRNA terminus and a 5'-phosphoryl group is left at the trailer molecule.. In terms of biological role, zinc phosphodiesterase, which displays some tRNA 3'-processing endonuclease activity. Probably involved in tRNA maturation, by removing a 3'-trailer from precursor tRNA. This Prochlorococcus marinus (strain MIT 9313) protein is Ribonuclease Z.